Consider the following 375-residue polypeptide: E3 ubiquitin-protein ligase RNF34 (375 aa).

The segment at Glu56–Glu107 adopts an FYVE-type zinc-finger fold. Positions Leu115–Ile134 constitute an SAP 1 domain. Ser169 is modified (phosphoserine). Residues Arg202–Thr250 are disordered. Over residues Thr221–Leu242 the composition is skewed to acidic residues. Phosphoserine occurs at positions 257 and 259. The SAP 2 domain occupies Val267–Arg281. An RING-type zinc finger spans residues Cys328–Arg363.

Interacts with CASP8 and CASP10. Interacts with p53/TP53; involved in p53/TP53 ubiquitination. Interacts (via RING-type zinc finger) with MDM2; the interaction stabilizes MDM2. Interacts (via RING-type zinc finger) with PPARGC1A. Interacts with NOD1. Post-translationally, autoubiquitinated (in vitro). In terms of processing, proteolytically cleaved by caspases upon induction of apoptosis by TNF.

It is found in the cell membrane. Its subcellular location is the endomembrane system. It localises to the nucleus. The protein localises to the nucleus speckle. The protein resides in the cytoplasm. It is found in the cytosol. The enzyme catalyses S-ubiquitinyl-[E2 ubiquitin-conjugating enzyme]-L-cysteine + [acceptor protein]-L-lysine = [E2 ubiquitin-conjugating enzyme]-L-cysteine + N(6)-ubiquitinyl-[acceptor protein]-L-lysine.. The protein operates within protein modification; protein ubiquitination. Functionally, E3 ubiquitin-protein ligase that regulates several biological processes through the ubiquitin-mediated proteasomal degradation of various target proteins. Ubiquitinates the caspases CASP8 and CASP10, promoting their proteasomal degradation, to negatively regulate cell death downstream of death domain receptors in the extrinsic pathway of apoptosis. May mediate 'Lys-48'-linked polyubiquitination of RIPK1 and its subsequent proteasomal degradation thereby indirectly regulating the tumor necrosis factor-mediated signaling pathway. Negatively regulates p53/TP53 through its direct ubiquitination and targeting to proteasomal degradation. Indirectly, may also negatively regulate p53/TP53 through ubiquitination and degradation of SFN. Mediates PPARGC1A proteasomal degradation probably through ubiquitination thereby indirectly regulating the metabolism of brown fat cells. Possibly involved in innate immunity, through 'Lys-48'-linked polyubiquitination of NOD1 and its subsequent proteasomal degradation. The sequence is that of E3 ubiquitin-protein ligase RNF34 (RNF34) from Bos taurus (Bovine).